A 149-amino-acid polypeptide reads, in one-letter code: D-aminoacyl-tRNA deacylase (149 aa).

Residues 139–140 (GP) carry the Gly-cisPro motif, important for rejection of L-amino acids motif.

Belongs to the DTD family. In terms of assembly, homodimer.

The protein resides in the cytoplasm. The enzyme catalyses glycyl-tRNA(Ala) + H2O = tRNA(Ala) + glycine + H(+). It catalyses the reaction a D-aminoacyl-tRNA + H2O = a tRNA + a D-alpha-amino acid + H(+). An aminoacyl-tRNA editing enzyme that deacylates mischarged D-aminoacyl-tRNAs. Also deacylates mischarged glycyl-tRNA(Ala), protecting cells against glycine mischarging by AlaRS. Acts via tRNA-based rather than protein-based catalysis; rejects L-amino acids rather than detecting D-amino acids in the active site. By recycling D-aminoacyl-tRNA to D-amino acids and free tRNA molecules, this enzyme counteracts the toxicity associated with the formation of D-aminoacyl-tRNA entities in vivo and helps enforce protein L-homochirality. The polypeptide is D-aminoacyl-tRNA deacylase (DTD1) (Candida glabrata (strain ATCC 2001 / BCRC 20586 / JCM 3761 / NBRC 0622 / NRRL Y-65 / CBS 138) (Yeast)).